The primary structure comprises 530 residues: 6-phosphofructo-2-kinase/fructose-2,6-bisphosphatase 2 (530 aa).

Polar residues predominate over residues 1–15; the sequence is MSGASSSEQNNNSYE. The interval 1–21 is disordered; that stretch reads MSGASSSEQNNNSYETKPPNL. The residue at position 2 (S2) is an N-acetylserine. Residues 2-248 are 6-phosphofructo-2-kinase; the sequence is SGASSSEQNN…VYYLMNIHVQ (247 aa). S29 bears the Phosphoserine; by PKA mark. ATP is bound at residue 45–53; the sequence is GLPARGKTY. R78 and R102 together coordinate beta-D-fructose 6-phosphate. D128 is an active-site residue. Beta-D-fructose 6-phosphate contacts are provided by T130 and R136. C158 is a catalytic residue. 167–172 contacts ATP; it reads NILEVK. Beta-D-fructose 6-phosphate is bound by residues K172, R193, and Y197. The segment at 249–530 is fructose-2,6-bisphosphatase; sequence PRTIYLCRHG…PPALASCPCH (282 aa). R256 provides a ligand contact to beta-D-fructose 2,6-bisphosphate. H257 (tele-phosphohistidine intermediate) is an active-site residue. G269 is a binding site for beta-D-fructose 2,6-bisphosphate. The active-site Proton donor/acceptor is the E326. 6 residues coordinate beta-D-fructose 2,6-bisphosphate: Y337, R351, K355, Y366, Q392, and R396. 348–351 is a binding site for ATP; sequence FALR. ATP-binding positions include 392 to 396 and Y428; that span reads QAVMR. The tract at residues 446–512 is disordered; sequence RDKPTNNFPK…GPTSRRPKSH (67 aa). A compositionally biased stretch (polar residues) spans 450–476; it reads TNNFPKNQTPVRMRRNSFTPLSSSNTI. Phosphoserine; by AMPK and PKA is present on S466. The residue at position 468 (T468) is a Phosphothreonine. The residue at position 475 (T475) is a Phosphothreonine; by PKC. A phosphoserine mark is found at S483 and S493.

It in the C-terminal section; belongs to the phosphoglycerate mutase family. As to quaternary structure, homodimer. Forms a heterodimer with PFKFB3. Phosphorylation by AMPK stimulates activity.

The enzyme catalyses beta-D-fructose 2,6-bisphosphate + H2O = beta-D-fructose 6-phosphate + phosphate. The catalysed reaction is beta-D-fructose 6-phosphate + ATP = beta-D-fructose 2,6-bisphosphate + ADP + H(+). Phosphorylation results in the activation of the kinase activity. Functionally, synthesis and degradation of fructose 2,6-bisphosphate. The polypeptide is 6-phosphofructo-2-kinase/fructose-2,6-bisphosphatase 2 (PFKFB2) (Pongo abelii (Sumatran orangutan)).